The following is a 237-amino-acid chain: Phosphoribosylaminoimidazole-succinocarboxamide synthase (237 aa).

It belongs to the SAICAR synthetase family.

The catalysed reaction is 5-amino-1-(5-phospho-D-ribosyl)imidazole-4-carboxylate + L-aspartate + ATP = (2S)-2-[5-amino-1-(5-phospho-beta-D-ribosyl)imidazole-4-carboxamido]succinate + ADP + phosphate + 2 H(+). It participates in purine metabolism; IMP biosynthesis via de novo pathway; 5-amino-1-(5-phospho-D-ribosyl)imidazole-4-carboxamide from 5-amino-1-(5-phospho-D-ribosyl)imidazole-4-carboxylate: step 1/2. The sequence is that of Phosphoribosylaminoimidazole-succinocarboxamide synthase from Listeria monocytogenes serotype 4b (strain CLIP80459).